A 51-amino-acid chain; its full sequence is Lantibiotic streptococcin A-M49 (51 aa).

The propeptide occupies 1 to 25 (MTKEHEIINSIQEVSLEELDQIIGA). Cross-links (beta-methyllanthionine (Thr-Cys)) lie at residues 33-38 (TISHEC) and 42-50 (TWAFLATCC). The segment at residues 35 to 49 (SHECHLNTWAFLATC) is a cross-link (lanthionine (Ser-Cys)). T48 is modified (2,3-didehydrobutyrine).

The protein belongs to the type A lantibiotic family. In terms of processing, maturation of lantibiotics involves the enzymatic conversion of Thr, and Ser into dehydrated AA and the formation of thioether bonds with cysteine. This is followed by membrane translocation and cleavage of the modified precursor.

The protein localises to the secreted. It localises to the cell surface. Its function is as follows. Lanthionine-containing peptide antibiotic (lantibiotic) active on certain Gram-positive bacteria. The bactericidal activity of lantibiotics is based on depolarization of energized bacterial cytoplasmic membranes, initiated by the formation of aqueous transmembrane pores. This chain is Lantibiotic streptococcin A-M49 (scnA'), found in Streptococcus pyogenes serotype M49.